A 195-amino-acid polypeptide reads, in one-letter code: Ribosome maturation factor RimM (195 aa).

Positions 101 to 191 (ADEWYPKDLI…YLTLDPPGGL (91 aa)) constitute a PRC barrel domain.

Belongs to the RimM family. Binds ribosomal protein uS19.

The protein localises to the cytoplasm. Its function is as follows. An accessory protein needed during the final step in the assembly of 30S ribosomal subunit, possibly for assembly of the head region. Essential for efficient processing of 16S rRNA. May be needed both before and after RbfA during the maturation of 16S rRNA. It has affinity for free ribosomal 30S subunits but not for 70S ribosomes. The sequence is that of Ribosome maturation factor RimM from Bifidobacterium adolescentis (strain ATCC 15703 / DSM 20083 / NCTC 11814 / E194a).